The sequence spans 1517 residues: DNA-directed RNA polymerase subunit beta' (1517 aa).

4 residues coordinate Zn(2+): Cys71, Cys73, Cys86, and Cys89. Mg(2+) is bound by residues Asp482, Asp484, and Asp486. 4 residues coordinate Zn(2+): Cys812, Cys886, Cys893, and Cys896.

The protein belongs to the RNA polymerase beta' chain family. In terms of assembly, the RNAP catalytic core consists of 2 alpha, 1 beta, 1 beta' and 1 omega subunit. When a sigma factor is associated with the core the holoenzyme is formed, which can initiate transcription. Mg(2+) is required as a cofactor. It depends on Zn(2+) as a cofactor.

It catalyses the reaction RNA(n) + a ribonucleoside 5'-triphosphate = RNA(n+1) + diphosphate. Its function is as follows. DNA-dependent RNA polymerase catalyzes the transcription of DNA into RNA using the four ribonucleoside triphosphates as substrates. The chain is DNA-directed RNA polymerase subunit beta' from Campylobacter jejuni subsp. jejuni serotype O:23/36 (strain 81-176).